The primary structure comprises 584 residues: 65 kDa protein (584 aa).

One can recognise a Toprim domain in the interval 459–548 (YDLYIAESAI…TKKVENWLPP (90 aa)).

The sequence is that of 65 kDa protein from Zymomonas mobilis subsp. mobilis (strain ATCC 10988 / DSM 424 / LMG 404 / NCIMB 8938 / NRRL B-806 / ZM1).